Consider the following 522-residue polypeptide: Berberine bridge enzyme-like Cyn d 4 (522 aa).

Positions 1-25 (MARSRAFAFALLICAVAASCHVALS) are cleaved as a signal peptide. Cys-41 and Cys-98 are disulfide-bonded. In terms of domain architecture, FAD-binding PCMH-type spans 76-252 (KTVKPLYIIT…ASWQVKLLPV (177 aa)). Asn-88 is a glycosylation site (N-linked (GlcNAc...) asparagine). Residues 108–114 (VRSGGHD), Ser-119, Ser-152, 176–177 (VC), 181–185 (GVGGH), Phe-191, Glu-237, and Val-242 contribute to the FAD site. The segment at residues 113 to 177 (HDYEGLSYRS…PKLGFPAGVC (65 aa)) is a cross-link (6-(S-cysteinyl)-8alpha-(pros-histidyl)-FAD (His-Cys)). Cysteines 308 and 329 form a disulfide. N-linked (GlcNAc...) asparagine glycosylation is found at Asn-325 and Asn-354. 461 to 465 (YVNYR) contributes to the FAD binding site. N-linked (GlcNAc...) asparagine glycosylation is present at Asn-477.

The protein belongs to the oxygen-dependent FAD-linked oxidoreductase family. Monomer. It depends on FAD as a cofactor. The FAD cofactor is bound via a bicovalent 6-S-cysteinyl, 8alpha-N1-histidyl FAD linkage. Post-translationally, the N-terminus is blocked. In terms of processing, glycosylated. N-glycosylated. Contains fucose, N-acetylglucosamine, and mannose as main carbohydrates (in a ratio of approximately 3:2:1), and a minute amount of xylose. The two most abundant oligosaccharides are Fuc(1)GlcNAc(2)Man(3) and Fuc(1)GlcNAc(2)Man(2), together comprising about 80% of the total carbohydrate content. They are structurally unusual in having a L-Fuc alpha-(1,3)-linked to Asn-linked GlcNAc without a Xyl beta-(1,2)-linked to the branching Man. The other oligosaccharides make up only 9% of the total carbohydrate content and are characterized by the presence of Xyl beta-(1,2)-linked to the branching Man. As to expression, expressed in pollen (at protein level).

This Cynodon dactylon (Bermuda grass) protein is Berberine bridge enzyme-like Cyn d 4.